The chain runs to 99 residues: SAGA-associated factor 11 (99 aa).

The SGF11-type zinc-finger motif lies at Phe-71–Cys-92.

It belongs to the SGF11 family. As to quaternary structure, component of the 1.8 MDa SAGA transcription coactivator-HAT complex. SAGA is built of 5 distinct domains with specialized functions. Within the SAGA complex, SUS1, SGF11, SGF73 and UBP8 form an additional subcomplex of SAGA called the DUB module (deubiquitination module). Interacts directly with SGF73, SUS1 and UBP8.

It is found in the nucleus. In terms of biological role, functions as a component of the transcription regulatory histone acetylation (HAT) complex SAGA. At the promoters, SAGA is required for recruitment of the basal transcription machinery. It influences RNA polymerase II transcriptional activity through different activities such as TBP interaction and promoter selectivity, interaction with transcription activators, and chromatin modification through histone acetylation and deubiquitination. SAGA acetylates nucleosomal histone H3 to some extent (to form H3K9ac, H3K14ac, H3K18ac and H3K23ac). SAGA interacts with DNA via upstream activating sequences (UASs). Involved in transcriptional regulation of a subset of SAGA-regulated genes. Within the SAGA complex, participates in a subcomplex, that specifically deubiquitinates histones H2B. This Candida glabrata (strain ATCC 2001 / BCRC 20586 / JCM 3761 / NBRC 0622 / NRRL Y-65 / CBS 138) (Yeast) protein is SAGA-associated factor 11.